Consider the following 271-residue polypeptide: Uridine-cytidine kinase 1-B (271 aa).

24–32 (GGTASGKST) is an ATP binding site. 6 residues coordinate substrate: D81, Y109, H114, R163, R172, and Q180. D209 serves as a coordination point for ATP. The interval 240–271 (RSQKRTLPGQGDSGGLLLQGKRTHLESSSRPH) is disordered. Residues 246–259 (LPGQGDSGGLLLQG) are compositionally biased toward low complexity. Residues 262–271 (THLESSSRPH) are compositionally biased toward basic and acidic residues.

The protein belongs to the uridine kinase family.

The catalysed reaction is uridine + ATP = UMP + ADP + H(+). It carries out the reaction cytidine + ATP = CMP + ADP + H(+). Its pathway is pyrimidine metabolism; CTP biosynthesis via salvage pathway; CTP from cytidine: step 1/3. It participates in pyrimidine metabolism; UMP biosynthesis via salvage pathway; UMP from uridine: step 1/1. In terms of biological role, phosphorylates uridine and cytidine to uridine monophosphate and cytidine monophosphate. Does not phosphorylate deoxyribonucleosides or purine ribonucleosides. Can use ATP or GTP as a phosphate donor. The polypeptide is Uridine-cytidine kinase 1-B (uck1-b) (Xenopus laevis (African clawed frog)).